Consider the following 141-residue polypeptide: Hemoglobin subunit alpha (141 aa).

One can recognise a Globin domain in the interval 1–141; it reads VLSPADKTNV…VSTVLTSKYR (141 aa). At Ser-3 the chain carries Phosphoserine. The residue at position 7 (Lys-7) is an N6-succinyllysine. Residue Thr-8 is modified to Phosphothreonine. Residue Lys-11 is modified to N6-succinyllysine. An N6-acetyllysine; alternate modification is found at Lys-16. Lys-16 carries the post-translational modification N6-succinyllysine; alternate. The residue at position 24 (Tyr-24) is a Phosphotyrosine. An N6-succinyllysine modification is found at Lys-40. His-58 provides a ligand contact to O2. Residue His-87 coordinates heme b. Position 102 is a phosphoserine (Ser-102). At Thr-108 the chain carries Phosphothreonine. Phosphoserine is present on residues Ser-124 and Ser-131. A phosphothreonine mark is found at Thr-134 and Thr-137. At Ser-138 the chain carries Phosphoserine.

Belongs to the globin family. As to quaternary structure, heterotetramer of two alpha chains and two beta chains. As to expression, red blood cells.

In terms of biological role, involved in oxygen transport from the lung to the various peripheral tissues. Hemopressin acts as an antagonist peptide of the cannabinoid receptor CNR1. Hemopressin-binding efficiently blocks cannabinoid receptor CNR1 and subsequent signaling. This is Hemoglobin subunit alpha (HBA) from Tursiops truncatus (Atlantic bottle-nosed dolphin).